The chain runs to 321 residues: N-acetyl-gamma-glutamyl-phosphate reductase (321 aa).

Residue Cys-131 is part of the active site.

This sequence belongs to the NAGSA dehydrogenase family. Type 1 subfamily.

It is found in the cytoplasm. It carries out the reaction N-acetyl-L-glutamate 5-semialdehyde + phosphate + NADP(+) = N-acetyl-L-glutamyl 5-phosphate + NADPH + H(+). It participates in amino-acid biosynthesis; L-arginine biosynthesis; N(2)-acetyl-L-ornithine from L-glutamate: step 3/4. Catalyzes the NADPH-dependent reduction of N-acetyl-5-glutamyl phosphate to yield N-acetyl-L-glutamate 5-semialdehyde. This Christiangramia forsetii (strain DSM 17595 / CGMCC 1.15422 / KT0803) (Gramella forsetii) protein is N-acetyl-gamma-glutamyl-phosphate reductase.